We begin with the raw amino-acid sequence, 208 residues long: Putative vomeronasal receptor-like protein 4 (208 aa).

At 1–19 the chain is on the extracellular side; it reads MEMTKLFSYIVIKNVYYPQ. The helical transmembrane segment at 20 to 40 threads the bilayer; it reads VSFGISANTFLLLFHIFTFAY. At 41–48 the chain is on the cytoplasmic side; it reads THRLKPID. Residues 49–69 traverse the membrane as a helical segment; it reads MTISHLPLIHILLLFTQAILV. At 70–97 the chain is on the extracellular side; the sequence is SSDLFESWNIQNNDLKCKIITFLNRVMR. Cys86 and Cys173 are oxidised to a cystine. A helical transmembrane segment spans residues 98-118; sequence GVSICTTCLLSVLQAITISPS. Topologically, residues 119–135 are cytoplasmic; sequence TSFLEKFKHISANHTLG. Residues 136–156 form a helical membrane-spanning segment; sequence FILFSWVLNMFITNNLLLFIV. Topologically, residues 157 to 183 are extracellular; the sequence is PTPNRIGASLLFVTEHCYVLPMSYTHR. Residues 184 to 204 traverse the membrane as a helical segment; it reads SLFFILMVLRDVIFIGLMVLS. Residues 205–208 are Cytoplasmic-facing; the sequence is SGYG.

The protein belongs to the G-protein coupled receptor 1 family. Expressed in olfactory nerve.

The protein resides in the cell membrane. Functionally, putative pheromone receptor. The polypeptide is Putative vomeronasal receptor-like protein 4 (VN1R17P) (Homo sapiens (Human)).